Here is a 185-residue protein sequence, read N- to C-terminus: Peptidyl-tRNA hydrolase (185 aa).

Residue Phe-14 participates in tRNA binding. Residue His-19 is the Proton acceptor of the active site. Positions 64, 66, and 112 each coordinate tRNA.

It belongs to the PTH family. Monomer.

The protein resides in the cytoplasm. The catalysed reaction is an N-acyl-L-alpha-aminoacyl-tRNA + H2O = an N-acyl-L-amino acid + a tRNA + H(+). Its function is as follows. Hydrolyzes ribosome-free peptidyl-tRNAs (with 1 or more amino acids incorporated), which drop off the ribosome during protein synthesis, or as a result of ribosome stalling. Catalyzes the release of premature peptidyl moieties from peptidyl-tRNA molecules trapped in stalled 50S ribosomal subunits, and thus maintains levels of free tRNAs and 50S ribosomes. This Exiguobacterium sp. (strain ATCC BAA-1283 / AT1b) protein is Peptidyl-tRNA hydrolase.